The chain runs to 311 residues: Dof zinc finger protein DOF1.4 (311 aa).

The segment covering 1–12 has biased composition (polar residues); the sequence is MQSKNMIVASSH. Residues 1–29 are disordered; sequence MQSKNMIVASSHQQQQQQQPQQPQPQLKC. Residues 13–26 are compositionally biased toward low complexity; sequence QQQQQQQPQQPQPQ. The Dof-type zinc finger occupies 27 to 81; the sequence is LKCPRCDSSNTKFCYYNNYSLSQPRHFCKACKRYWTRGGTLRNVPVGGSYRKNKR. 4 residues coordinate Zn(2+): Cys29, Cys32, Cys54, and Cys57. The interval 72 to 110 is disordered; the sequence is VGGSYRKNKRVKRPSTATTTTASTVSTTNSSSPNNPHQI. Residues 85–107 are compositionally biased toward low complexity; sequence PSTATTTTASTVSTTNSSSPNNP.

It is found in the nucleus. Transcription factor that binds specifically to a 5'-AA[AG]G-3' consensus core sequence. In Arabidopsis thaliana (Mouse-ear cress), this protein is Dof zinc finger protein DOF1.4 (DOF1.4).